Here is an 804-residue protein sequence, read N- to C-terminus: Ion-translocating oxidoreductase complex subunit C (804 aa).

2 consecutive 4Fe-4S ferredoxin-type domains span residues 366–397 and 407–436; these read SEMG…QQLY and KARA…VQYY. Cys377, Cys380, Cys383, Cys387, Cys416, Cys419, Cys422, and Cys426 together coordinate [4Fe-4S] cluster. Disordered stretches follow at residues 466–532 and 567–804; these read RLER…EVRV and KAAQ…MQED. 7 stretches are compositionally biased toward low complexity: residues 484–495, 567–582, 592–619, 629–660, 668–693, 706–731, and 744–769; these read SVASSDAGAIAA, KAAQ…APQQ, AAVA…EAPQ, KAAV…QQSA, and AAVA…ATEA.

The protein belongs to the 4Fe4S bacterial-type ferredoxin family. RnfC subfamily. The complex is composed of six subunits: RnfA, RnfB, RnfC, RnfD, RnfE and RnfG. It depends on [4Fe-4S] cluster as a cofactor.

It localises to the cell inner membrane. Functionally, part of a membrane-bound complex that couples electron transfer with translocation of ions across the membrane. In Erwinia tasmaniensis (strain DSM 17950 / CFBP 7177 / CIP 109463 / NCPPB 4357 / Et1/99), this protein is Ion-translocating oxidoreductase complex subunit C.